A 1755-amino-acid chain; its full sequence is MLSATPLYGNVHSWMNSERVRMCGASEDRKILVNDGDASKARLELREENPLNHNVVDASTAHRIDGLAALSMDRTGLIREGLRVPGNIVYSSLCGLGSEKGREAATSTLGGLGFSSERNPEMQFKPNTPETVEASAVSGKPPNGFSAIYKTPPGIQKSAVATAEALGLDRPASDKQSPLNINGASYLRLPWVNPYMEGATPAIYPFLDSPNKYSLNMYKALLPQQSYSLAQPLYSPVCTNGERFLYLPPPHYVGPHIPSSLASPMRLSTPSASPAIPPLVHCADKSLPWKMGVSPGNPVDSHAYPHIQNSKQPRVPSAKAVTSGLPGDTALLLPPSPRPSPRVHLPTQPAADTYSEFHKHYARISTSPSVALSKPYMTVSSEFPAARLSNGKYPKAPEGGEGAQPVPGHARKTAVQDRKDGSSPPLLEKQTVTKDVTDKPLDLSSKVVDVDASKADHMKKMAPTVLVHSRAGSGLVLSGSEIPKETLSPPGNGCAIYRSEIISTAPSSWVVPGPSPNEENNGKSMSLKNKALDWAIPQQRSSSCPRMGGTDAVITNVSGSVSSAGRPASASPAPNANADGTKTSRSSVETTPSVIQHVGQPPATPAKHSSSTSSKGAKASNPEPSFKANENGLPPSSIFLSPNEAFRSPPIPYPRSYLPYPAPEGIAVSPLSLHGKGPVYPHPVLLPNGSLFPGHLAPKPGLPYGLPTGRPEFVTYQDALGLGMVHPMLIPHTPIEITKEEKPERRSRSHERARYEDPTLRNRFSEILETSSTKLHPDVPTDKNLKPNPNWNQGKTVVKSDKLVYVDLLREEPDAKTDTNVSKPSFAAESVGQSAEPPKPSVEPALQQHRDFIALREELGRISDFHETYTFKQPVFTVSKDSVLAGTNKENLGLPVSTPFLEPPLGSDGPAVTFGKTQEDPKPFCVGSAPPSVDVTPTYTKDGADEAESNDGKVLKPKPSKLAKRIANSAGYVGDRFKCVTTELYADSSQLSREQRALQMEGLQEDSILCLPAAYCERAMMRFSELEMKEREGGHPATKDSEMCKFSPADWERLKGNQDKKPKSVTLEEAIAEQNESERCEYSVGNKHRDPFEAPEDKDLPVEKYFVERQPVSEPPADQVASDMPHSPTLRVDRKRKVSGDSSHTETTAEEVPEDPLLKAKRRRVSKDDWPEREMTNSSSNHLEDPHYSELTNLKVCIELTGLHPKKQRHLLHLRERWEQQVSAADGKPGRQSRKEVTQATQPEAIPQGTNITEEKPGRKRAEAKGNRSWSEESLKPSDNEQGLPVFSGSPPMKSLSSTSAGGKKQAQPSCAPASRPPAKQQKIKENQKTDVLCADEEEDCQAASLLQKYTDNSEKPSGKRLCKTKHLIPQESRRGLPLTGEYYVENADGKVTVRRFRKRPEPSSDYDLSPAKQEPKPFDRLQQLLPASQSTQLPCSSSPQETTQSRPMPPEARRLIVNKNAGETLLQRAARLGYEEVVLYCLENKICDVNHRDNAGYCALHEACARGWLNIVRHLLEYGADVNCSAQDGTRPLHDAVENDHLEIVRLLLSYGADPTLATYSGRTIMKMTHSELMEKFLTDYLNDLQGRNDDDASGTWDFYGSSVCEPDDESGYDVLANPPGPEDQDDDDDAYSDVFEFEFSETPLLPCYNIQVSVAQGPRNWLLLSDVLKKLKMSSRIFRCNFPNVEIVTIAEAEFYRQVSASLLFSCSKDLEAFNPESKELLDLVEFTNEIQTLLGSSVEWLHPSDLASDNYW.

The segment at 309–345 is disordered; the sequence is NSKQPRVPSAKAVTSGLPGDTALLLPPSPRPSPRVHL. S336, S340, S365, and S367 each carry phosphoserine. The tract at residues 388 to 438 is disordered; sequence LSNGKYPKAPEGGEGAQPVPGHARKTAVQDRKDGSSPPLLEKQTVTKDVTD. K392 is subject to N6-acetyllysine. S423 bears the Phosphoserine mark. Residues 498 to 514 are interaction with BCL6; the sequence is RSEIISTAPSSWVVPGP. A compositionally biased stretch (low complexity) spans 557 to 578; it reads VSGSVSSAGRPASASPAPNANA. 4 disordered regions span residues 557–641, 737–760, 773–794, and 815–844; these read VSGS…IFLS, ITKE…DPTL, TKLH…WNQG, and AKTD…SVEP. Positions 580–594 are enriched in polar residues; sequence GTKTSRSSVETTPSV. The segment covering 605-620 has biased composition (low complexity); the sequence is PAKHSSSTSSKGAKAS. The segment covering 775 to 785 has biased composition (basic and acidic residues); that stretch reads LHPDVPTDKNL. Residue K786 forms a Glycyl lysine isopeptide (Lys-Gly) (interchain with G-Cter in SUMO2) linkage. K872 is covalently cross-linked (Glycyl lysine isopeptide (Lys-Gly) (interchain with G-Cter in SUMO2)). Disordered regions lie at residues 1071–1187 and 1220–1328; these read IAEQ…EDPH and QQVS…KENQ. Residues 1076–1107 are compositionally biased toward basic and acidic residues; the sequence is ESERCEYSVGNKHRDPFEAPEDKDLPVEKYFV. Residues S1127 and S1139 each carry the phosphoserine modification. Over residues 1166 to 1175 the composition is skewed to basic and acidic residues; it reads SKDDWPEREM. The span at 1238-1252 shows a compositional bias: polar residues; the sequence is TQATQPEAIPQGTNI. Residues 1253–1279 show a composition bias toward basic and acidic residues; the sequence is TEEKPGRKRAEAKGNRSWSEESLKPSD. K1256 is covalently cross-linked (Glycyl lysine isopeptide (Lys-Gly) (interchain with G-Cter in SUMO2)). Residues S1290, S1345, and S1410 each carry the phosphoserine modification. K1413 participates in a covalent cross-link: Glycyl lysine isopeptide (Lys-Gly) (interchain with G-Cter in SUMO2). Polar residues predominate over residues 1430-1447; it reads QSTQLPCSSSPQETTQSR. Positions 1430–1451 are disordered; the sequence is QSTQLPCSSSPQETTQSRPMPP. ANK repeat units lie at residues 1462–1495, 1496–1525, and 1529–1558; these read AGET…HRDN, AGYC…DVNC, and DGTR…DPTL. The necessary and sufficient for interaction with PCGF1 stretch occupies residues 1634–1748; that stretch reads SDVFEFEFSE…SSVEWLHPSD (115 aa).

Belongs to the BCOR family. As to quaternary structure, interacts with BCL6; the interaction is direct. Forms ternary complexes with BCL6 and SMRT/NCOR2 on selected target genes promoters; potently repress expression. Can interact with HDAC1, HDAC3 and HDAC5. Interacts with PCGF1; the interaction is direct. Interacts with KDM2B. Component of an approximately 800 kDa repressive BCOR complex at least composed of BCOR, RYBP, PCGF1, RING1, RNF2/RING2, KDM2B and SKP1. Interacts with CPNE4 (via VWFA domain). Isoform 1 may interact with MLLT3/AF9. In terms of tissue distribution, ubiquitously expressed.

The protein resides in the nucleus. Its function is as follows. Transcriptional corepressor. May specifically inhibit gene expression when recruited to promoter regions by sequence-specific DNA-binding proteins such as BCL6 and MLLT3. This repression may be mediated at least in part by histone deacetylase activities which can associate with this corepressor. Involved in the repression of TFAP2A; impairs binding of BCL6 and KDM2B to TFAP2A promoter regions. Via repression of TFAP2A acts as a negative regulator of osteo-dentiogenic capacity in adult stem cells; the function implies inhibition of methylation on histone H3 'Lys-4' (H3K4me3) and 'Lys-36' (H3K36me2). The protein is BCL-6 corepressor (BCOR) of Homo sapiens (Human).